A 310-amino-acid chain; its full sequence is Aspartate carbamoyltransferase catalytic subunit (310 aa).

2 residues coordinate carbamoyl phosphate: arginine 55 and threonine 56. An L-aspartate-binding site is contributed by lysine 85. The carbamoyl phosphate site is built by arginine 106, histidine 135, and glutamine 138. Positions 168 and 230 each coordinate L-aspartate. Residues leucine 268 and proline 269 each coordinate carbamoyl phosphate.

Belongs to the aspartate/ornithine carbamoyltransferase superfamily. ATCase family. Heterododecamer (2C3:3R2) of six catalytic PyrB chains organized as two trimers (C3), and six regulatory PyrI chains organized as three dimers (R2).

The catalysed reaction is carbamoyl phosphate + L-aspartate = N-carbamoyl-L-aspartate + phosphate + H(+). It functions in the pathway pyrimidine metabolism; UMP biosynthesis via de novo pathway; (S)-dihydroorotate from bicarbonate: step 2/3. Functionally, catalyzes the condensation of carbamoyl phosphate and aspartate to form carbamoyl aspartate and inorganic phosphate, the committed step in the de novo pyrimidine nucleotide biosynthesis pathway. In Buchnera aphidicola subsp. Acyrthosiphon pisum (strain APS) (Acyrthosiphon pisum symbiotic bacterium), this protein is Aspartate carbamoyltransferase catalytic subunit.